Consider the following 308-residue polypeptide: Ribosomal protein L11 methyltransferase (308 aa).

The S-adenosyl-L-methionine site is built by Thr-157, Gly-178, Asp-200, and Asn-243.

It belongs to the methyltransferase superfamily. PrmA family.

It localises to the cytoplasm. It carries out the reaction L-lysyl-[protein] + 3 S-adenosyl-L-methionine = N(6),N(6),N(6)-trimethyl-L-lysyl-[protein] + 3 S-adenosyl-L-homocysteine + 3 H(+). Functionally, methylates ribosomal protein L11. The protein is Ribosomal protein L11 methyltransferase of Desulforamulus reducens (strain ATCC BAA-1160 / DSM 100696 / MI-1) (Desulfotomaculum reducens).